The chain runs to 166 residues: uncharacterized protein (166 aa).

This is an uncharacterized protein from Saccharomyces cerevisiae (strain ATCC 204508 / S288c) (Baker's yeast).